A 274-amino-acid polypeptide reads, in one-letter code: Ribonucleoside-diphosphate reductase small chain (274 aa).

Fe cation is bound by residues aspartate 70, glutamate 101, and histidine 104. Tyrosine 108 is a catalytic residue. Fe cation contacts are provided by glutamate 163, glutamate 197, and histidine 200.

The protein belongs to the ribonucleoside diphosphate reductase small chain family. Heterodimer of a large and a small chain. Fe cation is required as a cofactor.

It catalyses the reaction a 2'-deoxyribonucleoside 5'-diphosphate + [thioredoxin]-disulfide + H2O = a ribonucleoside 5'-diphosphate + [thioredoxin]-dithiol. Functionally, ribonucleoside-diphosphate reductase holoenzyme provides the precursors necessary for viral DNA synthesis. Allows virus growth in non-dividing cells. Catalyzes the biosynthesis of deoxyribonucleotides from the corresponding ribonucleotides. This Sus scrofa (Pig) protein is Ribonucleoside-diphosphate reductase small chain.